Here is a 248-residue protein sequence, read N- to C-terminus: ATP synthase subunit a, chloroplastic (248 aa).

5 consecutive transmembrane segments (helical) span residues 38–58 (QVLI…TLAV), 96–116 (VPFI…GALF), 135–155 (INTT…AGFT), 200–220 (LVVA…VMFL), and 221–241 (GLFT…AYIG).

The protein belongs to the ATPase A chain family. In terms of assembly, F-type ATPases have 2 components, CF(1) - the catalytic core - and CF(0) - the membrane proton channel. CF(1) has five subunits: alpha(3), beta(3), gamma(1), delta(1), epsilon(1). CF(0) has four main subunits: a, b, b' and c.

It localises to the plastid. The protein localises to the chloroplast thylakoid membrane. Key component of the proton channel; it plays a direct role in the translocation of protons across the membrane. The protein is ATP synthase subunit a, chloroplastic of Cryptomeria japonica (Japanese cedar).